A 52-amino-acid polypeptide reads, in one-letter code: Ribosome modulation factor (52 aa).

It belongs to the ribosome modulation factor family.

The protein localises to the cytoplasm. Its function is as follows. During stationary phase, converts 70S ribosomes to an inactive dimeric form (100S ribosomes). This is Ribosome modulation factor from Xenorhabdus nematophila (strain ATCC 19061 / DSM 3370 / CCUG 14189 / LMG 1036 / NCIMB 9965 / AN6).